We begin with the raw amino-acid sequence, 324 residues long: MSASSQSRPTTIACLLGPTASGKTAAALALAARRPIEIVSVDSALVYRDMDIGTAKPSRDERASVPHHLIDIIDPADAYSAAEFRADTLRLIGEIVARGRTPLLAGGTMLYYKALTQGLNDLPGADPEVRAALDADAARDGWPALHARLAQVDPDTAARLAPNDSQRIQRALEIFMLSGQPMSALLAAPRRTDDAAAAYRFVPVALEPSDRAVLHARIAQRFDAMLDAGFIDEVERLRRRDDLHPDLPSMRCVGYRQAWEFLDGDTDYRTMRDKGIFATRQLCKRQITWLRAMPERIVVDCIAPDSTARALDALERVLDGRTPD.

17–24 contacts ATP; that stretch reads GPTASGKT. A substrate-binding site is contributed by 19–24; that stretch reads TASGKT. Interaction with substrate tRNA stretches follow at residues 42 to 45, 166 to 170, 251 to 256, and 284 to 291; these read DSAL, QRIQR, RCVGYR, and KRQITWLR.

It belongs to the IPP transferase family. Monomer. Mg(2+) is required as a cofactor.

The enzyme catalyses adenosine(37) in tRNA + dimethylallyl diphosphate = N(6)-dimethylallyladenosine(37) in tRNA + diphosphate. Functionally, catalyzes the transfer of a dimethylallyl group onto the adenine at position 37 in tRNAs that read codons beginning with uridine, leading to the formation of N6-(dimethylallyl)adenosine (i(6)A). The polypeptide is tRNA dimethylallyltransferase (Burkholderia orbicola (strain MC0-3)).